Reading from the N-terminus, the 201-residue chain is dITP/XTP pyrophosphatase (201 aa).

Position 7-12 (7-12 (TNNKGK)) interacts with substrate. Residues glutamate 40 and aspartate 69 each contribute to the Mg(2+) site. The Proton acceptor role is filled by aspartate 69. Substrate contacts are provided by residues serine 70, 152 to 155 (FGYD), lysine 175, and 180 to 181 (HR).

It belongs to the HAM1 NTPase family. Homodimer. The cofactor is Mg(2+).

The catalysed reaction is XTP + H2O = XMP + diphosphate + H(+). It catalyses the reaction dITP + H2O = dIMP + diphosphate + H(+). It carries out the reaction ITP + H2O = IMP + diphosphate + H(+). Functionally, pyrophosphatase that catalyzes the hydrolysis of nucleoside triphosphates to their monophosphate derivatives, with a high preference for the non-canonical purine nucleotides XTP (xanthosine triphosphate), dITP (deoxyinosine triphosphate) and ITP. Seems to function as a house-cleaning enzyme that removes non-canonical purine nucleotides from the nucleotide pool, thus preventing their incorporation into DNA/RNA and avoiding chromosomal lesions. This chain is dITP/XTP pyrophosphatase, found in Desulforamulus reducens (strain ATCC BAA-1160 / DSM 100696 / MI-1) (Desulfotomaculum reducens).